The chain runs to 319 residues: Tyrosine--tRNA ligase (319 aa).

Tyrosine 40 contributes to the L-tyrosine binding site. The 'HIGH' region signature appears at proline 45–histidine 53. L-tyrosine contacts are provided by tyrosine 159, glutamine 163, aspartate 166, and glutamine 181. Residues lysine 216–serine 220 carry the 'KMSKS' region motif. Serine 219 is a binding site for ATP.

Belongs to the class-I aminoacyl-tRNA synthetase family. TyrS type 3 subfamily. As to quaternary structure, homodimer.

The protein localises to the cytoplasm. The enzyme catalyses tRNA(Tyr) + L-tyrosine + ATP = L-tyrosyl-tRNA(Tyr) + AMP + diphosphate + H(+). In terms of biological role, catalyzes the attachment of tyrosine to tRNA(Tyr) in a two-step reaction: tyrosine is first activated by ATP to form Tyr-AMP and then transferred to the acceptor end of tRNA(Tyr). This is Tyrosine--tRNA ligase from Methanococcus maripaludis (strain DSM 14266 / JCM 13030 / NBRC 101832 / S2 / LL).